Reading from the N-terminus, the 166-residue chain is Glutamyl-tRNA(Gln) amidotransferase subunit C-2, mitochondrial (166 aa).

This sequence belongs to the GatC family. As to quaternary structure, subunit of the heterotrimeric GatCAB amidotransferase (AdT) complex, composed of A, B and C subunits.

The protein resides in the mitochondrion. The enzyme catalyses L-glutamyl-tRNA(Gln) + L-glutamine + ATP + H2O = L-glutaminyl-tRNA(Gln) + L-glutamate + ADP + phosphate + H(+). Its function is as follows. Allows the formation of correctly charged Gln-tRNA(Gln) through the transamidation of misacylated Glu-tRNA(Gln) in the mitochondria. The reaction takes place in the presence of glutamine and ATP through an activated gamma-phospho-Glu-tRNA(Gln). The sequence is that of Glutamyl-tRNA(Gln) amidotransferase subunit C-2, mitochondrial from Culex quinquefasciatus (Southern house mosquito).